Here is a 363-residue protein sequence, read N- to C-terminus: MVKFLSLTSSVTALLLLSLGANGVAAAATTCTVAKSGSDDTAAITKAFSDCKNGGTVVFSKDTTYNLNGILILSDLKNVNIELAGTIKLPGFDKAVKGLKSYIQLIGTNVKVYGGGVINANHSSVSDISIINSPRAHMGVTNATDVLINNITLHTASTSSLRPKNTDALDVSRSSNVVFQNSKLTVGDDCLAINEEVTNVTLSKITCNGGHGFSVGSLGKGGANQHVKTVRIHDSVCNDCQNGVRIKTWPGGKGSVSDIKFNNVELNNVENPILITTHYCDKNQMNYCTNNDKTSLSISDVVISDITGSASNDGNPIVSINCSTSTPCTDFTLSGVKITKASNTPKNVCVNLDGSSKIAECSA.

Residues 1 to 26 (MVKFLSLTSSVTALLLLSLGANGVAA) form the signal peptide. Residues N121, N142, and N150 are each glycosylated (N-linked (GlcNAc...) asparagine). PbH1 repeat units follow at residues 143–173 (ATDV…DVSR), 174–195 (SSNV…AINE), 197–217 (VTNV…SVGS), 227–248 (VKTV…RIKT), and 256–277 (VSDI…LITT). The active-site Proton donor is D188. C190 and C207 are disulfide-bonded. A glycan (N-linked (GlcNAc...) asparagine) is linked at N199. H211 is an active-site residue. N321 is a glycosylation site (N-linked (GlcNAc...) asparagine). A disulfide bond links C322 and C328. A PbH1 6 repeat occupies 328 to 354 (CTDFTLSGVKITKASNTPKNVCVNLDG).

The protein belongs to the glycosyl hydrolase 28 family. In terms of processing, N-glycosylated.

It localises to the secreted. The catalysed reaction is [(1-&gt;4)-alpha-D-galacturonosyl](n) + H2O = alpha-D-galacturonate + [(1-&gt;4)-alpha-D-galacturonosyl](n-1). Specific in hydrolyzing the terminal glycosidic bond of polygalacturonic acid and oligogalacturonates. Has no activity towards trigalacturonic acid. In Rhizopus delemar (strain RA 99-880 / ATCC MYA-4621 / FGSC 9543 / NRRL 43880) (Mucormycosis agent), this protein is Exopolygalacturonase rpg13.